Here is a 787-residue protein sequence, read N- to C-terminus: DNA ligase (787 aa).

Residues 32 to 36 (DVEYD), 81 to 82 (SL), and glutamate 121 contribute to the NAD(+) site. Lysine 123 functions as the N6-AMP-lysine intermediate in the catalytic mechanism. Residues arginine 144, glutamate 181, lysine 297, and lysine 321 each contribute to the NAD(+) site. Residues cysteine 415, cysteine 418, cysteine 445, and cysteine 451 each coordinate Zn(2+). The 85-residue stretch at 703–787 (VEGLPLAGQT…RLTELGVAVD (85 aa)) folds into the BRCT domain.

Belongs to the NAD-dependent DNA ligase family. LigA subfamily. Mg(2+) is required as a cofactor. Mn(2+) serves as cofactor.

The enzyme catalyses NAD(+) + (deoxyribonucleotide)n-3'-hydroxyl + 5'-phospho-(deoxyribonucleotide)m = (deoxyribonucleotide)n+m + AMP + beta-nicotinamide D-nucleotide.. DNA ligase that catalyzes the formation of phosphodiester linkages between 5'-phosphoryl and 3'-hydroxyl groups in double-stranded DNA using NAD as a coenzyme and as the energy source for the reaction. It is essential for DNA replication and repair of damaged DNA. The chain is DNA ligase from Pseudomonas savastanoi pv. phaseolicola (strain 1448A / Race 6) (Pseudomonas syringae pv. phaseolicola (strain 1448A / Race 6)).